A 78-amino-acid chain; its full sequence is Lantibiotic cinnamycin (78 aa).

Residues 1-59 (MTASILQQSVVDADFRAALLENPAAFGASAAALPTPVEAQDQASLDFWTKDIAATEAFA) constitute a propeptide that is removed on maturation. 2 cross-links (beta-methyllanthionine (Cys-Thr)) span residues 60–77 (CRQSCSFGPFTFVCDGNT) and 64–70 (CSFGPFT). The segment at residues 63–73 (SCSFGPFTFVC) is a cross-link (lanthionine (Ser-Cys)). A cross-link (lysinoalanine (Ser-Lys)) is located at residues 65 to 78 (SFGPFTFVCDGNTK). (3R)-3-hydroxyaspartate is present on D74.

It belongs to the type B lantibiotic family. In terms of processing, maturation of lantibiotics involves the enzymatic conversion of Thr, and Ser into dehydrated AA and the formation of thioether bonds with cysteine or the formation of dialkylamine bonds with lysine. This is followed by membrane translocation and cleavage of the modified precursor.

Its function is as follows. Can act as inhibitor of the enzyme phospholipase A2, and of the angiotensin-converting enzyme. Shows inhibitory activities against herpes simplex virus and immunopotentiating activities. Its antimicrobial activities are not very pronounced. In Streptomyces griseoverticillatus (Streptoverticillium griseoverticillatum), this protein is Lantibiotic cinnamycin (cinA).